Reading from the N-terminus, the 132-residue chain is Small ribosomal subunit protein uS8 (132 aa).

This sequence belongs to the universal ribosomal protein uS8 family. In terms of assembly, part of the 30S ribosomal subunit. Contacts proteins S5 and S12.

One of the primary rRNA binding proteins, it binds directly to 16S rRNA central domain where it helps coordinate assembly of the platform of the 30S subunit. The protein is Small ribosomal subunit protein uS8 of Brevibacillus brevis (strain 47 / JCM 6285 / NBRC 100599).